Reading from the N-terminus, the 457-residue chain is Bifunctional protein GlmU (457 aa).

The segment at 1–230 (MSKRYAVVLA…FEESLGVNDR (230 aa)) is pyrophosphorylase. UDP-N-acetyl-alpha-D-glucosamine contacts are provided by residues 9–12 (LAAG), Lys23, Gln73, and 78–79 (GT). Asp103 contacts Mg(2+). Residues Gly140, Glu155, Asn170, and Asn228 each coordinate UDP-N-acetyl-alpha-D-glucosamine. Asn228 contributes to the Mg(2+) binding site. A linker region spans residues 231-251 (IALAEASKLMQRRINENHMRN). The interval 252 to 457 (GVTLVNPENT…GYAKHLNHGK (206 aa)) is N-acetyltransferase. UDP-N-acetyl-alpha-D-glucosamine-binding residues include Arg333 and Lys351. Residue His363 is the Proton acceptor of the active site. Positions 366 and 377 each coordinate UDP-N-acetyl-alpha-D-glucosamine. Residues 386-387 (NY), Ala423, and Arg440 contribute to the acetyl-CoA site.

It in the N-terminal section; belongs to the N-acetylglucosamine-1-phosphate uridyltransferase family. In the C-terminal section; belongs to the transferase hexapeptide repeat family. Homotrimer. Requires Mg(2+) as cofactor.

The protein localises to the cytoplasm. It carries out the reaction alpha-D-glucosamine 1-phosphate + acetyl-CoA = N-acetyl-alpha-D-glucosamine 1-phosphate + CoA + H(+). The catalysed reaction is N-acetyl-alpha-D-glucosamine 1-phosphate + UTP + H(+) = UDP-N-acetyl-alpha-D-glucosamine + diphosphate. It functions in the pathway nucleotide-sugar biosynthesis; UDP-N-acetyl-alpha-D-glucosamine biosynthesis; N-acetyl-alpha-D-glucosamine 1-phosphate from alpha-D-glucosamine 6-phosphate (route II): step 2/2. It participates in nucleotide-sugar biosynthesis; UDP-N-acetyl-alpha-D-glucosamine biosynthesis; UDP-N-acetyl-alpha-D-glucosamine from N-acetyl-alpha-D-glucosamine 1-phosphate: step 1/1. Its pathway is bacterial outer membrane biogenesis; LPS lipid A biosynthesis. Catalyzes the last two sequential reactions in the de novo biosynthetic pathway for UDP-N-acetylglucosamine (UDP-GlcNAc). The C-terminal domain catalyzes the transfer of acetyl group from acetyl coenzyme A to glucosamine-1-phosphate (GlcN-1-P) to produce N-acetylglucosamine-1-phosphate (GlcNAc-1-P), which is converted into UDP-GlcNAc by the transfer of uridine 5-monophosphate (from uridine 5-triphosphate), a reaction catalyzed by the N-terminal domain. In Listeria innocua serovar 6a (strain ATCC BAA-680 / CLIP 11262), this protein is Bifunctional protein GlmU.